The chain runs to 442 residues: Adenylosuccinate synthetase (442 aa).

GTP-binding positions include glycine 30–lysine 36 and glycine 58–threonine 60. Aspartate 31 (proton acceptor) is an active-site residue. Residues aspartate 31 and glycine 58 each coordinate Mg(2+). Residues aspartate 31–lysine 34, asparagine 56–histidine 59, threonine 148, arginine 162, asparagine 241, threonine 256, and arginine 320 contribute to the IMP site. The active-site Proton donor is histidine 59. Threonine 316–arginine 322 is a substrate binding site. Residues arginine 322, lysine 348–aspartate 350, and glycine 430–glycine 432 contribute to the GTP site.

Belongs to the adenylosuccinate synthetase family. In terms of assembly, homodimer. The cofactor is Mg(2+).

The protein resides in the cytoplasm. It catalyses the reaction IMP + L-aspartate + GTP = N(6)-(1,2-dicarboxyethyl)-AMP + GDP + phosphate + 2 H(+). The protein operates within purine metabolism; AMP biosynthesis via de novo pathway; AMP from IMP: step 1/2. In terms of biological role, plays an important role in the de novo pathway and in the salvage pathway of purine nucleotide biosynthesis. Catalyzes the first committed step in the biosynthesis of AMP from IMP. This chain is Adenylosuccinate synthetase, found in Trichoplax adhaerens (Trichoplax reptans).